Consider the following 261-residue polypeptide: Small ribosomal subunit protein uS2 (261 aa).

The residue at position 2 (S2) is an N-acetylserine. Residues 212–261 form a disordered region; that stretch reads QNAAEEAKAEETEEAPAAEAETEWTGETDDVDWADSGATPAAEDAAASNW. Residues 222–244 show a composition bias toward acidic residues; the sequence is ETEEAPAAEAETEWTGETDDVDW.

This sequence belongs to the universal ribosomal protein uS2 family. Component of the small ribosomal subunit. Mature ribosomes consist of a small (40S) and a large (60S) subunit. The 40S subunit contains about 33 different proteins and 1 molecule of RNA (18S). The 60S subunit contains about 49 different proteins and 3 molecules of RNA (25S, 5.8S and 5S). Interacts with RPS21.

Its subcellular location is the cytoplasm. Required for the assembly and/or stability of the 40S ribosomal subunit. Required for the processing of the 20S rRNA-precursor to mature 18S rRNA in a late step of the maturation of 40S ribosomal subunits. The protein is Small ribosomal subunit protein uS2 of Candida tropicalis (Yeast).